The sequence spans 431 residues: MDFFRRHQKKVLALVGVALSSYLFIDYVKKKFFEIQGRLSSERTAKQNLRRRFEQNQQDADFTIMALLSSLTTPVMERYPVDQIKAELQSKRRPTDRVLALESSTSSSATAQTVPTMTSGATEEGEKSKTQLWQDLKRTTISRAFSLVYADALLIFFTRLQLNILGRRNYVNSVVALAQQGREGNAEGRVAPSFGDLADMGYFGDLSGSSSFGETIVDPDLDEQYLTFSWWLLNEGWVSLSERVEEAVRRVWDPVSPKAELGFDELSELIGRTQMLIDRPLNPSSPLNFLSQLLPPREQEEYVLAQNPSDTAAPIVGPTLRRLLDETADFIESPNAAEVIERLVHSGLSVFMDKLAVTFGATPADSGSPYPVVLPTAKVKLPSILANMARQAGGMAQGSPGVENEYIDVMNQVQELTSFSAVVYSSFDWAL.

The Peroxisomal portion of the chain corresponds to 1–10; the sequence is MDFFRRHQKK. The chain crosses the membrane as a helical span at residues 11 to 28; sequence VLALVGVALSSYLFIDYV. The Cytoplasmic portion of the chain corresponds to 29 to 431; it reads KKKFFEIQGR…VVYSSFDWAL (403 aa). Positions 95–126 are disordered; that stretch reads TDRVLALESSTSSSATAQTVPTMTSGATEEGE. Positions 112–121 are enriched in polar residues; sequence QTVPTMTSGA.

This sequence belongs to the peroxin-3 family.

It is found in the peroxisome membrane. In terms of biological role, involved in peroxisome biosynthesis. Seems to directly or indirectly sequesters components of the peroxisome biogenesis machinery. The polypeptide is Peroxisomal biogenesis factor 3 (PEX3) (Yarrowia lipolytica (strain CLIB 122 / E 150) (Yeast)).